We begin with the raw amino-acid sequence, 96 residues long: Co-chaperonin GroES (96 aa).

This sequence belongs to the GroES chaperonin family. In terms of assembly, heptamer of 7 subunits arranged in a ring. Interacts with the chaperonin GroEL.

Its subcellular location is the cytoplasm. Its function is as follows. Together with the chaperonin GroEL, plays an essential role in assisting protein folding. The GroEL-GroES system forms a nano-cage that allows encapsulation of the non-native substrate proteins and provides a physical environment optimized to promote and accelerate protein folding. GroES binds to the apical surface of the GroEL ring, thereby capping the opening of the GroEL channel. In Albidiferax ferrireducens (strain ATCC BAA-621 / DSM 15236 / T118) (Rhodoferax ferrireducens), this protein is Co-chaperonin GroES.